Consider the following 162-residue polypeptide: Sorting nexin-3 (162 aa).

Residues 1-23 form a disordered region; the sequence is MPREFKSFGSTEKSLLSKGHGEP. The PX domain maps to 38–161; sequence IEVHNPKTHI…VRFIEAEKFV (124 aa). Positions 81, 83, 112, and 127 each coordinate a 1,2-diacyl-sn-glycero-3-phospho-(1D-myo-inositol-3-phosphate).

Belongs to the sorting nexin family. Monomer. Interacts with RBD2, YIF1, YIP1 and YIP5.

The protein localises to the cytoplasm. It localises to the golgi apparatus membrane. It is found in the prevacuolar compartment membrane. Functionally, required for retention of late Golgi membrane proteins. Component of the retrieval machinery that functions by direct interaction with the cytosolic tails of certain TGN membrane proteins during the sorting/budding process at the prevacuolar compartment. Binds phosphatidylinositol 3-phosphate (PtdIns(P3)). This Saccharomyces cerevisiae (strain ATCC 204508 / S288c) (Baker's yeast) protein is Sorting nexin-3 (SNX3).